The sequence spans 92 residues: Long neurotoxin 3FTx-Oxy2 (92 aa).

A signal peptide spans 1–21; it reads MKTLLLTLVVVTIVCLDLGYT. 4 cysteine pairs are disulfide-bonded: C24–C42, C35–C63, C67–C79, and C80–C85.

The protein belongs to the three-finger toxin family. Long-chain subfamily. Type II alpha-neurotoxin sub-subfamily. In terms of tissue distribution, expressed by the venom gland.

The protein resides in the secreted. Its function is as follows. Binds with high affinity to muscular (alpha-1/CHRNA1) and neuronal (alpha-7/CHRNA7) nicotinic acetylcholine receptor (nAChR) and inhibits acetylcholine from binding to the receptor, thereby impairing neuromuscular and neuronal transmission. The polypeptide is Long neurotoxin 3FTx-Oxy2 (Oxyuranus microlepidotus (Inland taipan)).